Reading from the N-terminus, the 283-residue chain is 2-dehydro-3-deoxyphosphooctonate aldolase (283 aa).

It belongs to the KdsA family.

It is found in the cytoplasm. The catalysed reaction is D-arabinose 5-phosphate + phosphoenolpyruvate + H2O = 3-deoxy-alpha-D-manno-2-octulosonate-8-phosphate + phosphate. Its pathway is carbohydrate biosynthesis; 3-deoxy-D-manno-octulosonate biosynthesis; 3-deoxy-D-manno-octulosonate from D-ribulose 5-phosphate: step 2/3. The protein operates within bacterial outer membrane biogenesis; lipopolysaccharide biosynthesis. The protein is 2-dehydro-3-deoxyphosphooctonate aldolase of Vibrio parahaemolyticus serotype O3:K6 (strain RIMD 2210633).